The primary structure comprises 211 residues: Protein-L-isoaspartate O-methyltransferase (211 aa).

Serine 60 is an active-site residue.

The protein belongs to the methyltransferase superfamily. L-isoaspartyl/D-aspartyl protein methyltransferase family.

It is found in the cytoplasm. The catalysed reaction is [protein]-L-isoaspartate + S-adenosyl-L-methionine = [protein]-L-isoaspartate alpha-methyl ester + S-adenosyl-L-homocysteine. In terms of biological role, catalyzes the methyl esterification of L-isoaspartyl residues in peptides and proteins that result from spontaneous decomposition of normal L-aspartyl and L-asparaginyl residues. It plays a role in the repair and/or degradation of damaged proteins. This Pseudomonas syringae pv. tomato (strain ATCC BAA-871 / DC3000) protein is Protein-L-isoaspartate O-methyltransferase.